The sequence spans 130 residues: uncharacterized protein (130 aa).

This is an uncharacterized protein from Aedes vexans (Inland floodwater mosquito).